A 218-amino-acid polypeptide reads, in one-letter code: Twisted gastrulation protein homolog 1-B (218 aa).

An N-terminal signal peptide occupies residues 1 to 25 (MKPSFLHIPAAALLLCSLWILPIHC). Asn-52, Asn-81, and Asn-147 each carry an N-linked (GlcNAc...) asparagine glycan.

The protein belongs to the twisted gastrulation protein family. As to quaternary structure, binds directly to bmp2, bmp4 and bmp7 and can form a ternary complex with bmps and chordin, thus preventing the binding of bmps to their cell surface receptors.

It localises to the secreted. Involved in dorsal-ventral patterning, permitting peak BMP signaling by antagonizing the residual anti-BMP activity of the cleavage products of chrd. Functions to promote the formation of ventral mesoderm by increasing the activity of bmp7 and other BMPS. Seems to antagonize BMP signaling by forming ternary complexes with chrd and BMPs, thereby preventing BMPs from binding to their receptors. In addition to the anti-BMP function, also has pro-BMP activity, partly mediated by cleavage and degradation of chrd, which releases BMPs from ternary complexes. May be an important modulator of BMP-regulated cartilage development and chondrocyte differentiation. The polypeptide is Twisted gastrulation protein homolog 1-B (twsg1-b) (Xenopus laevis (African clawed frog)).